A 581-amino-acid chain; its full sequence is MKASRFFVSTLKDAPADAEVVSHQLMMRAGLIKKLGAGIYSYMPMGLRVLRKIEAIVREEMNRAGAVELTMPVVQPAELWQETGRFDKMGPELLRIQDRHGRDFVVQPTSEEVITDIARQELRSYKQLPKNFYQIQTKFRDERRPRFGLMRGREFIMKDAYSFDRDPAAAKASYLVMEQAYRRIFDRFGLTYRAVAADSGAIGGDLSEEFQVVAATGEDAIVYCPQSDYAANMEKAEALAPSGVRGAATRALNKTSTPDKSTCAEVAQWLGVPLQSTVKSLVMATDEAQAADGSVKSQVWLLLLRGDHDMNQVKVAKLPGLGQGLRFATLDEIEAHFGCQPGYLGPIGLQKPLKIVADRDVALMADWICGANEAHWHLTGVNWGRDLPEPDMVADLRNVVAGDRSPDGKGVLAIERGIEVGHVFYLGTKYSRAMNASFLDENGKPQPLEMGCYGIGITRLPAAAIEQNHDARGIIWPDAIAPFTAVICPIGMERSAAVQAAADKLYADFLAAGIDVLLDDRGERPGAMFADWELIGVPHRVVISERGLKEDQLEYQHRRDQSATKVAAADILAHVKGRMTV.

It belongs to the class-II aminoacyl-tRNA synthetase family. ProS type 1 subfamily. In terms of assembly, homodimer.

It is found in the cytoplasm. The catalysed reaction is tRNA(Pro) + L-proline + ATP = L-prolyl-tRNA(Pro) + AMP + diphosphate. In terms of biological role, catalyzes the attachment of proline to tRNA(Pro) in a two-step reaction: proline is first activated by ATP to form Pro-AMP and then transferred to the acceptor end of tRNA(Pro). As ProRS can inadvertently accommodate and process non-cognate amino acids such as alanine and cysteine, to avoid such errors it has two additional distinct editing activities against alanine. One activity is designated as 'pretransfer' editing and involves the tRNA(Pro)-independent hydrolysis of activated Ala-AMP. The other activity is designated 'posttransfer' editing and involves deacylation of mischarged Ala-tRNA(Pro). The misacylated Cys-tRNA(Pro) is not edited by ProRS. The chain is Proline--tRNA ligase from Verminephrobacter eiseniae (strain EF01-2).